Consider the following 473-residue polypeptide: Phosphoglucosamine mutase (473 aa).

Serine 102 (phosphoserine intermediate) is an active-site residue. Mg(2+) is bound by residues serine 102, aspartate 248, aspartate 250, and aspartate 252. Serine 102 carries the phosphoserine modification.

Belongs to the phosphohexose mutase family. It depends on Mg(2+) as a cofactor. In terms of processing, activated by phosphorylation.

The enzyme catalyses alpha-D-glucosamine 1-phosphate = D-glucosamine 6-phosphate. Catalyzes the conversion of glucosamine-6-phosphate to glucosamine-1-phosphate. This is Phosphoglucosamine mutase from Rhodospirillum centenum (strain ATCC 51521 / SW).